Reading from the N-terminus, the 73-residue chain is Translation initiation factor IF-1 (73 aa).

The S1-like domain maps to 1-73; the sequence is MAKKDGVIEI…TRGRIVYRYK (73 aa).

The protein belongs to the IF-1 family. Component of the 30S ribosomal translation pre-initiation complex which assembles on the 30S ribosome in the order IF-2 and IF-3, IF-1 and N-formylmethionyl-tRNA(fMet); mRNA recruitment can occur at any time during PIC assembly.

It localises to the cytoplasm. In terms of biological role, one of the essential components for the initiation of protein synthesis. Stabilizes the binding of IF-2 and IF-3 on the 30S subunit to which N-formylmethionyl-tRNA(fMet) subsequently binds. Helps modulate mRNA selection, yielding the 30S pre-initiation complex (PIC). Upon addition of the 50S ribosomal subunit IF-1, IF-2 and IF-3 are released leaving the mature 70S translation initiation complex. The chain is Translation initiation factor IF-1 from Leifsonia xyli subsp. xyli (strain CTCB07).